Here is a 161-residue protein sequence, read N- to C-terminus: Beta-lactoglobulin-2 (161 aa).

Intrachain disulfides connect C66–C159 and C106–C119.

The protein belongs to the calycin superfamily. Lipocalin family. Monomer. Synthesized in mammary gland and secreted in milk.

The protein resides in the secreted. Primary component of whey, it binds retinol and is probably involved in the transport of that molecule. The chain is Beta-lactoglobulin-2 (LGB2) from Canis lupus familiaris (Dog).